The primary structure comprises 329 residues: Neuropeptides B/W receptor type 1 (329 aa).

The Extracellular portion of the chain corresponds to 1-43; sequence MHNLTLFESGGDNVSCGGSSLGCPNGSSLAPLPLPQPLAVAVP. 3 N-linked (GlcNAc...) asparagine glycosylation sites follow: asparagine 3, asparagine 13, and asparagine 25. The chain crosses the membrane as a helical span at residues 44–64; it reads VVYGVICAVGLAGNSAVLYVL. The Cytoplasmic segment spans residues 65-75; it reads LRTPRMKTVTN. A helical membrane pass occupies residues 76 to 96; the sequence is VFILNLAIADELFTLVLPINI. The Extracellular portion of the chain corresponds to 97 to 112; sequence ADFLLRRWPFGEVMCK. A disulfide bridge connects residues cysteine 111 and cysteine 190. The helical transmembrane segment at 113 to 133 threads the bilayer; that stretch reads LIVAVDQYNTFSSLYFLAVMS. Over 134 to 158 the chain is Cytoplasmic; sequence ADRYLVVLATAESRRVSGRTYGAAR. The helical transmembrane segment at 159–179 threads the bilayer; that stretch reads AVSLAVWALVTLVVLPFAVFA. The Extracellular portion of the chain corresponds to 180-209; that stretch reads RLDEEQGRRQCVLVFPQPEAFWWRASRLYT. Residues 210–230 traverse the membrane as a helical segment; the sequence is LVLGFAIPVTTICALYTTLLC. Residues 231-250 are Cytoplasmic-facing; sequence RLRAIQLDSHAKALDRAKKR. A helical membrane pass occupies residues 251 to 271; that stretch reads VTLLVAAILAVCLLCWTPYHL. Residues 272–289 are Extracellular-facing; that stretch reads STIVALTTDLPQTPLVIG. The helical transmembrane segment at 290 to 312 threads the bilayer; it reads ISYFITSLSYANSCLNPFLYAFL. Over 313 to 329 the chain is Cytoplasmic; it reads DDSFRRSLRQLVSCRSA.

This sequence belongs to the G-protein coupled receptor 1 family.

Its subcellular location is the cell membrane. Functionally, interacts specifically with a number of opioid ligands. Receptor for neuropeptides B and W, which may be involved in neuroendocrine system regulation, food intake and the organization of other signals. The protein is Neuropeptides B/W receptor type 1 (Npbwr1) of Mus musculus (Mouse).